We begin with the raw amino-acid sequence, 285 residues long: uncharacterized protein (285 aa).

A substrate-binding site is contributed by Ser-168. Tyr-181 (proton acceptor) is an active-site residue.

Belongs to the short-chain dehydrogenases/reductases (SDR) family.

This is an uncharacterized protein from Haemophilus influenzae (strain ATCC 51907 / DSM 11121 / KW20 / Rd).